A 288-amino-acid polypeptide reads, in one-letter code: Protoheme IX farnesyltransferase 2 (288 aa).

Helical transmembrane passes span 8-28, 36-56, 85-105, 108-128, 131-151, 152-172, 211-231, 233-252, and 267-287; these read ITKP…FFLA, LMLF…GCVV, VAFV…FQLV, LSAV…TMWY, NSVY…LVGY, LAVT…FCLW, AYVV…EAGY, YLAV…FRSI, and VSLL…IPLA.

Belongs to the UbiA prenyltransferase family. Protoheme IX farnesyltransferase subfamily.

The protein resides in the cell inner membrane. The enzyme catalyses heme b + (2E,6E)-farnesyl diphosphate + H2O = Fe(II)-heme o + diphosphate. It functions in the pathway porphyrin-containing compound metabolism; heme O biosynthesis; heme O from protoheme: step 1/1. In terms of biological role, converts heme B (protoheme IX) to heme O by substitution of the vinyl group on carbon 2 of heme B porphyrin ring with a hydroxyethyl farnesyl side group. The polypeptide is Protoheme IX farnesyltransferase 2 (Vibrio parahaemolyticus serotype O3:K6 (strain RIMD 2210633)).